A 311-amino-acid polypeptide reads, in one-letter code: Malate dehydrogenase (311 aa).

Residues 7 to 13 (GAAGGIG) and Asp-34 contribute to the NAD(+) site. Residues Arg-81 and Arg-87 each coordinate substrate. NAD(+) contacts are provided by residues Asn-94 and 117-119 (ITN). Residues Asn-119 and Arg-153 each coordinate substrate. The active-site Proton acceptor is the His-177. NAD(+) is bound at residue Met-227.

This sequence belongs to the LDH/MDH superfamily. MDH type 1 family. Homodimer.

It carries out the reaction (S)-malate + NAD(+) = oxaloacetate + NADH + H(+). In terms of biological role, catalyzes the reversible oxidation of malate to oxaloacetate. This chain is Malate dehydrogenase, found in Shewanella baltica (strain OS223).